The following is a 174-amino-acid chain: Disulfide bond formation protein B (174 aa).

Residues 1–12 lie on the Cytoplasmic side of the membrane; it reads MLNWIDTAPRRI. Residues 13–29 traverse the membrane as a helical segment; it reads LALISAACVAMLAFGMY. Residues 30 to 47 lie on the Periplasmic side of the membrane; it reads LQHVVGLEPCPMCIVQRY. C39 and C42 are joined by a disulfide. A helical transmembrane segment spans residues 48–64; that stretch reads ALIGVAVFAGLASARGQ. The Cytoplasmic portion of the chain corresponds to 65–69; that stretch reads KGWWM. A helical membrane pass occupies residues 70–87; that stretch reads TWSVLALVAAGFGAFVAA. The Periplasmic segment spans residues 88-143; that stretch reads RQSWLQWYPPEIATCGRDFYGMIENYPISRAIPMIFRGSGDCTAVDWTFLGGSIAN. A disulfide bond links C102 and C129. Residues 144 to 162 traverse the membrane as a helical segment; sequence WSFVWFLLFAVLLLVLLVR. The Cytoplasmic segment spans residues 163-174; the sequence is GGRGAPDTLARA.

Belongs to the DsbB family.

The protein resides in the cell inner membrane. Required for disulfide bond formation in some periplasmic proteins. Acts by oxidizing the DsbA protein. The polypeptide is Disulfide bond formation protein B (Acidovorax sp. (strain JS42)).